The primary structure comprises 382 residues: Alkanesulfonate monooxygenase (382 aa).

It belongs to the SsuD family.

It catalyses the reaction an alkanesulfonate + FMNH2 + O2 = an aldehyde + FMN + sulfite + H2O + 2 H(+). Functionally, catalyzes the desulfonation of aliphatic sulfonates. In Pseudomonas putida (strain ATCC 47054 / DSM 6125 / CFBP 8728 / NCIMB 11950 / KT2440), this protein is Alkanesulfonate monooxygenase.